Reading from the N-terminus, the 659-residue chain is Putative pentatricopeptide repeat-containing protein At3g16890, mitochondrial (659 aa).

The N-terminal 32 residues, 1–32 (MRGFASSASRIATAAAASKSLNASTSVNPKLS), are a transit peptide targeting the mitochondrion. 15 PPR repeats span residues 109-143 (DQSLKSVLGNALFRKGPLLLSMELLKEIRDSGYRI), 144-178 (SDELMCVLIGSWGRLGLAKYCNDVFAQISFLGMKP), 179-213 (STRLYNAVIDALVKSNSLDLAYLKFQQMRSDGCKP), 214-248 (DRFTYNILIHGVCKKGVVDEAIRLVKQMEQEGNRP), 249-283 (NVFTYTILIDGFLIAGRVDEALKQLEMMRVRKLNP), 284-318 (NEATIRTFVHGIFRCLPPCKAFEVLVGFMEKDSNL), 319-353 (QRVGYDAVLYCLSNNSMAKETGQFLRKIGERGYIP), 354-388 (DSSTFNAAMSCLLKGHDLVETCRIFDGFVSRGVKP), 389-423 (GFNGYLVLVQALLNAQRFSEGDRYLKQMGVDGLLS), 424-458 (SVYSYNAVIDCLCKARRIENAAMFLTEMQDRGISP), 459-493 (NLVTFNTFLSGYSVRGDVKKVHGVLEKLLVHGFKP), 494-528 (DVITFSLIINCLCRAKEIKDAFDCFKEMLEWGIEP), 529-563 (NEITYNILIRSCCSTGDTDRSVKLFAKMKENGLSP), 564-598 (DLYAYNATIQSFCKMRKVKKAEELLKTMLRIGLKP), and 599-633 (DNFTYSTLIKALSESGRESEAREMFSSIERHGCVP).

The protein belongs to the PPR family. P subfamily.

The protein localises to the mitochondrion. Functionally, required for the ubiquinol-cytochrome c oxidoreductase activity of mitochondrial complex III. The polypeptide is Putative pentatricopeptide repeat-containing protein At3g16890, mitochondrial (PPR40) (Arabidopsis thaliana (Mouse-ear cress)).